The sequence spans 99 residues: Apolipoprotein C-III (99 aa).

A signal peptide spans 1–20 (MQPRTLLTVALLALLASARA). Met-63 bears the Methionine sulfoxide mark. Positions 68–99 (RFLKGYWSKFTDKFTGFWDSNPEDQPTPAIES) are lipid-binding. Residue Thr-94 is glycosylated (O-linked (GalNAc...) threonine).

It belongs to the apolipoprotein C3 family. Post-translationally, the most abundant glycoforms are characterized by an O-linked disaccharide galactose linked to N-acetylgalactosamine (Gal-GalNAc), further modified with up to 3 sialic acid residues. Less abundant glycoforms are characterized by more complex and fucosylated glycan moieties. O-glycosylated on Thr-94 with a core 1 or possibly core 8 glycan.

Its subcellular location is the secreted. Its function is as follows. Component of triglyceride-rich very low density lipoproteins (VLDL) and high density lipoproteins (HDL) in plasma. Plays a multifaceted role in triglyceride homeostasis. Intracellularly, promotes hepatic very low density lipoprotein 1 (VLDL1) assembly and secretion; extracellularly, attenuates hydrolysis and clearance of triglyceride-rich lipoproteins (TRLs). Impairs the lipolysis of TRLs by inhibiting lipoprotein lipase and the hepatic uptake of TRLs by remnant receptors. Formed of several curved helices connected via semiflexible hinges, so that it can wrap tightly around the curved micelle surface and easily adapt to the different diameters of its natural binding partners. The chain is Apolipoprotein C-III (Apoc3) from Mus musculus (Mouse).